A 712-amino-acid polypeptide reads, in one-letter code: Ribosome-releasing factor 2, mitochondrial (712 aa).

The N-terminal 29 residues, 1-29, are a transit peptide targeting the mitochondrion; sequence MLRCAWQNGPRQSNRWLRHLSNQIWKRSY. A tr-type G domain is found at 31-310; sequence SKIRNIGILA…AVNSYLPAPE (280 aa). GTP is bound by residues 40–47, 104–108, and 158–161; these read AHIDAGKT, DTPGH, and NKMD.

It belongs to the TRAFAC class translation factor GTPase superfamily. Classic translation factor GTPase family. EF-G/EF-2 subfamily.

The protein resides in the mitochondrion. Functionally, mitochondrial GTPase that mediates the disassembly of ribosomes from messenger RNA at the termination of mitochondrial protein biosynthesis. Not involved in the GTP-dependent ribosomal translocation step during translation elongation. The sequence is that of Ribosome-releasing factor 2, mitochondrial from Drosophila yakuba (Fruit fly).